We begin with the raw amino-acid sequence, 334 residues long: Holliday junction branch migration complex subunit RuvB (334 aa).

The segment at 4-184 (ADRLIQPQLQ…FGIPLRLEFY (181 aa)) is large ATPase domain (RuvB-L). ATP contacts are provided by residues Arg-24, Gly-65, Lys-68, Thr-69, Thr-70, 131–133 (EDY), Arg-174, Tyr-184, and Arg-221. Residue Thr-69 coordinates Mg(2+). The tract at residues 185 to 255 (NVKDLSTIVT…VAEHALDLLD (71 aa)) is small ATPAse domain (RuvB-S). Positions 258-334 (GEGFDYMDRK…YLHFGMIKPE (77 aa)) are head domain (RuvB-H). 3 residues coordinate DNA: Arg-294, Arg-313, and Arg-318.

Belongs to the RuvB family. Homohexamer. Forms an RuvA(8)-RuvB(12)-Holliday junction (HJ) complex. HJ DNA is sandwiched between 2 RuvA tetramers; dsDNA enters through RuvA and exits via RuvB. An RuvB hexamer assembles on each DNA strand where it exits the tetramer. Each RuvB hexamer is contacted by two RuvA subunits (via domain III) on 2 adjacent RuvB subunits; this complex drives branch migration. In the full resolvosome a probable DNA-RuvA(4)-RuvB(12)-RuvC(2) complex forms which resolves the HJ.

It localises to the cytoplasm. It catalyses the reaction ATP + H2O = ADP + phosphate + H(+). The RuvA-RuvB-RuvC complex processes Holliday junction (HJ) DNA during genetic recombination and DNA repair, while the RuvA-RuvB complex plays an important role in the rescue of blocked DNA replication forks via replication fork reversal (RFR). RuvA specifically binds to HJ cruciform DNA, conferring on it an open structure. The RuvB hexamer acts as an ATP-dependent pump, pulling dsDNA into and through the RuvAB complex. RuvB forms 2 homohexamers on either side of HJ DNA bound by 1 or 2 RuvA tetramers; 4 subunits per hexamer contact DNA at a time. Coordinated motions by a converter formed by DNA-disengaged RuvB subunits stimulates ATP hydrolysis and nucleotide exchange. Immobilization of the converter enables RuvB to convert the ATP-contained energy into a lever motion, pulling 2 nucleotides of DNA out of the RuvA tetramer per ATP hydrolyzed, thus driving DNA branch migration. The RuvB motors rotate together with the DNA substrate, which together with the progressing nucleotide cycle form the mechanistic basis for DNA recombination by continuous HJ branch migration. Branch migration allows RuvC to scan DNA until it finds its consensus sequence, where it cleaves and resolves cruciform DNA. The protein is Holliday junction branch migration complex subunit RuvB of Shewanella sp. (strain MR-4).